A 195-amino-acid chain; its full sequence is N-terminal acetyltransferase B complex catalytic subunit NAT3 (195 aa).

One can recognise an N-acetyltransferase domain in the interval 2-172 (TTIQPFEPVD…DAFDMRKAMA (171 aa)).

Belongs to the acetyltransferase family. GNAT subfamily. In terms of assembly, component of the N-terminal acetyltransferase B (NatB) complex, which is composed of NAT3 and MDM20.

The protein localises to the cytoplasm. It carries out the reaction N-terminal L-methionyl-L-asparaginyl-[protein] + acetyl-CoA = N-terminal N(alpha)-acetyl-L-methionyl-L-asparaginyl-[protein] + CoA + H(+). The enzyme catalyses N-terminal L-methionyl-L-glutaminyl-[protein] + acetyl-CoA = N-terminal N(alpha)-acetyl-L-methionyl-L-glutaminyl-[protein] + CoA + H(+). It catalyses the reaction N-terminal L-methionyl-L-aspartyl-[protein] + acetyl-CoA = N-terminal N(alpha)-acetyl-L-methionyl-L-aspartyl-[protein] + CoA + H(+). The catalysed reaction is N-terminal L-methionyl-L-glutamyl-[protein] + acetyl-CoA = N-terminal N(alpha)-acetyl-L-methionyl-L-glutamyl-[protein] + CoA + H(+). Its function is as follows. Catalytic subunit of the NatB N-terminal acetyltransferase, which catalyzes acetylation of the amino-terminal methionine residues of all proteins beginning with Met-Asp or Met-Glu and of some proteins beginning with Met-Asn, Met-Gln or Met-Met. NatB acetylates TPM1 protein and regulates tropomyocin-actin interactions, it is presumed to N-acetylate 15% of all yeast proteins. The protein is N-terminal acetyltransferase B complex catalytic subunit NAT3 of Saccharomyces cerevisiae (strain ATCC 204508 / S288c) (Baker's yeast).